The following is a 425-amino-acid chain: Glutamyl-tRNA reductase (425 aa).

Residues 49–52 (TCNR), Ser109, 114–116 (EGQ), and Gln120 each bind substrate. Catalysis depends on Cys50, which acts as the Nucleophile. NADP(+) is bound at residue 189–194 (GAGETG).

It belongs to the glutamyl-tRNA reductase family. As to quaternary structure, homodimer.

The catalysed reaction is (S)-4-amino-5-oxopentanoate + tRNA(Glu) + NADP(+) = L-glutamyl-tRNA(Glu) + NADPH + H(+). The protein operates within porphyrin-containing compound metabolism; protoporphyrin-IX biosynthesis; 5-aminolevulinate from L-glutamyl-tRNA(Glu): step 1/2. It participates in porphyrin-containing compound metabolism; chlorophyll biosynthesis. Catalyzes the NADPH-dependent reduction of glutamyl-tRNA(Glu) to glutamate 1-semialdehyde (GSA). The protein is Glutamyl-tRNA reductase of Chlorobium luteolum (strain DSM 273 / BCRC 81028 / 2530) (Pelodictyon luteolum).